An 817-amino-acid polypeptide reads, in one-letter code: V-type proton ATPase subunit a1 (817 aa).

The Cytoplasmic segment spans residues Met1–Pro422. Positions Asp97–Glu133 form a coiled coil. A helical transmembrane segment spans residues Phe423–Leu443. The Vacuolar portion of the chain corresponds to Tyr444–Arg468. Residues Tyr469–Phe489 form a helical membrane-spanning segment. The Cytoplasmic portion of the chain corresponds to Ser490–Lys547. A helical membrane pass occupies residues Met548 to Ala568. Residues Arg569–Gln580 lie on the Vacuolar side of the membrane. A helical transmembrane segment spans residues Phe581 to Ile601. Residues Lys602–Gln639 lie on the Cytoplasmic side of the membrane. A helical transmembrane segment spans residues Ile640–Ala660. Topologically, residues Leu661–Asn758 are vacuolar. A helical transmembrane segment spans residues Ile759–Met779. At Met780 to Ile817 the chain is on the cytoplasmic side.

This sequence belongs to the V-ATPase 116 kDa subunit family. In terms of assembly, V-ATPase is a heteromultimeric enzyme composed of a peripheral catalytic V1 complex (components A to H) attached to an integral membrane V0 proton pore complex (components: a, c, c'', d and e).

The protein resides in the vacuole membrane. The protein localises to the golgi apparatus. Its subcellular location is the trans-Golgi network membrane. In terms of biological role, essential component of the vacuolar proton pump (V-ATPase), a multimeric enzyme that catalyzes the translocation of protons across the membranes. Required for assembly and activity of the V-ATPase. Required during cell expansion. The protein is V-type proton ATPase subunit a1 of Arabidopsis thaliana (Mouse-ear cress).